The chain runs to 260 residues: Thiazole synthase (260 aa).

Lysine 100 serves as the catalytic Schiff-base intermediate with DXP. Residues glycine 161, 187–188 (AG), and 209–210 (NT) contribute to the 1-deoxy-D-xylulose 5-phosphate site.

The protein belongs to the ThiG family. As to quaternary structure, homotetramer. Forms heterodimers with either ThiH or ThiS.

It is found in the cytoplasm. It catalyses the reaction [ThiS sulfur-carrier protein]-C-terminal-Gly-aminoethanethioate + 2-iminoacetate + 1-deoxy-D-xylulose 5-phosphate = [ThiS sulfur-carrier protein]-C-terminal Gly-Gly + 2-[(2R,5Z)-2-carboxy-4-methylthiazol-5(2H)-ylidene]ethyl phosphate + 2 H2O + H(+). The protein operates within cofactor biosynthesis; thiamine diphosphate biosynthesis. Functionally, catalyzes the rearrangement of 1-deoxy-D-xylulose 5-phosphate (DXP) to produce the thiazole phosphate moiety of thiamine. Sulfur is provided by the thiocarboxylate moiety of the carrier protein ThiS. In vitro, sulfur can be provided by H(2)S. The chain is Thiazole synthase from Dechloromonas aromatica (strain RCB).